The sequence spans 356 residues: MILFGSTGSIGVNALKLAALKNIPISALACGDNIALLNEQIARFKPKFVAIKDSKNKHLVKHDRVFIGQEGLEQILTECQDKLLLNAIVGFAGLKSTLKAKELGKNIALANKESLVVAGSFLKGAKFLPVDSEHAALKFLLEGKKNIAKLYITASGGAFYKYKIKDLNQVSLKDALKHPNWNMGAKITIDSATMANKLFEIIEAYHLYDFKEIDALIEPRSLVHAMCEFKNGASTAYFSKADMKLAISDAIFEKQDTPILEAVDFSKMPALKFHPISTKKYPIFKLKNTFLKEPNLGVIINAANEVGVYNFLENKSGFLDIAKCIFKALDHFGVPKISSIEEVFEYDFKTREYLRS.

NADPH-binding residues include Thr7, Gly8, Ser9, Ile10, Gly31, Asn33, and Asn111. Lys112 provides a ligand contact to 1-deoxy-D-xylulose 5-phosphate. Glu113 contributes to the NADPH binding site. Asp131 contacts Mn(2+). Positions 132, 133, 155, and 178 each coordinate 1-deoxy-D-xylulose 5-phosphate. Glu133 contributes to the Mn(2+) binding site. Gly184 is a binding site for NADPH. 1-deoxy-D-xylulose 5-phosphate is bound by residues Ser191, Asn196, Lys197, and Glu200. Glu200 serves as a coordination point for Mn(2+).

It belongs to the DXR family. It depends on Mg(2+) as a cofactor. Requires Mn(2+) as cofactor.

It catalyses the reaction 2-C-methyl-D-erythritol 4-phosphate + NADP(+) = 1-deoxy-D-xylulose 5-phosphate + NADPH + H(+). The protein operates within isoprenoid biosynthesis; isopentenyl diphosphate biosynthesis via DXP pathway; isopentenyl diphosphate from 1-deoxy-D-xylulose 5-phosphate: step 1/6. Its function is as follows. Catalyzes the NADPH-dependent rearrangement and reduction of 1-deoxy-D-xylulose-5-phosphate (DXP) to 2-C-methyl-D-erythritol 4-phosphate (MEP). This is 1-deoxy-D-xylulose 5-phosphate reductoisomerase from Campylobacter jejuni (strain RM1221).